The chain runs to 280 residues: Diaminopimelate epimerase (280 aa).

Asn-15 and Asn-66 together coordinate substrate. Residue Cys-75 is the Proton donor of the active site. Substrate contacts are provided by residues 76–77, Asn-163, Asn-196, and 214–215; these read GN and ER. Cys-223 acts as the Proton acceptor in catalysis. Residue 224-225 coordinates substrate; it reads GT.

This sequence belongs to the diaminopimelate epimerase family. As to quaternary structure, homodimer.

Its subcellular location is the cytoplasm. It carries out the reaction (2S,6S)-2,6-diaminopimelate = meso-2,6-diaminopimelate. Its pathway is amino-acid biosynthesis; L-lysine biosynthesis via DAP pathway; DL-2,6-diaminopimelate from LL-2,6-diaminopimelate: step 1/1. In terms of biological role, catalyzes the stereoinversion of LL-2,6-diaminopimelate (L,L-DAP) to meso-diaminopimelate (meso-DAP), a precursor of L-lysine and an essential component of the bacterial peptidoglycan. The protein is Diaminopimelate epimerase of Phocaeicola vulgatus (strain ATCC 8482 / DSM 1447 / JCM 5826 / CCUG 4940 / NBRC 14291 / NCTC 11154) (Bacteroides vulgatus).